Reading from the N-terminus, the 67-residue chain is Arasin 2 (67 aa).

A signal peptide spans 1-25 (MERRTLLVVLLVCSCVVAAAAEASP). The disordered stretch occupies residues 22 to 44 (EASPSRWPSPGRPRPFPGRPNPI). Pro residues predominate over residues 31 to 44 (PGRPRPFPGRPNPI). 2 disulfide bridges follow: cysteine 50–cysteine 59 and cysteine 52–cysteine 57.

Interacts with chitin through the N-terminal region (26-48). This interaction may be important, since chitin is a component of the fungal cell wall, as well as of the crab exoskeleton (permitting a possible action of arasin in wound healing in case of lesions). Disulfide bonds are important for activity especially against Gram-negative bacteria, since the linearization of the peptide causes a strong decrease of activity on these bacteria. Mainly expressed in hemocytes. No or very low expression in heart, gills, inestines, and epidermis.

Antimicrobial peptide that has a large activity spectrum with activity against Gram-positive, Gram-negative bacteria, as well as against fungi. Shows activity at micromolar concentrations. Displays minimal inhibitory concentration (MIC) values lower than minimal bactericidal concentrations (MBC). May have a dual mode of action depending on the peptide concentrations. At MIC concentrations, the peptide penetrates into the cytoplasm of target cells (tested on the Gram-negative E.coli). The two inner membrane proteins YgdD and SbmA may be required for this uptake. At concentrations higher than MIC, arasin may act by disrupting membranes. Does not show hemolytic activity. The protein is Arasin 2 of Hyas araneus (Atlantic lyre crab).